The chain runs to 254 residues: RNA polymerase sigma factor SigI8 (254 aa).

The Polymerase core binding signature appears at 61 to 74; it reads DEYSIALIAFNEAI. Residues 209–228 constitute a DNA-binding region (H-T-H motif); the sequence is YKELTERFNLCRRTLEKNRK.

This sequence belongs to the sigma-70 factor family. SigI subfamily. Interacts with RsgI8.

It localises to the cytoplasm. Negatively regulated by the anti-sigma-I factor RsgI8. Sigma factors are initiation factors that promote the attachment of RNA polymerase to specific initiation sites and are then released. The polypeptide is RNA polymerase sigma factor SigI8 (Acetivibrio thermocellus (strain ATCC 27405 / DSM 1237 / JCM 9322 / NBRC 103400 / NCIMB 10682 / NRRL B-4536 / VPI 7372) (Clostridium thermocellum)).